A 297-amino-acid polypeptide reads, in one-letter code: Pyridoxal 5'-phosphate synthase subunit PdxS (297 aa).

D-ribose 5-phosphate is bound at residue D27. Catalysis depends on K84, which acts as the Schiff-base intermediate with D-ribose 5-phosphate. G156 is a D-ribose 5-phosphate binding site. Residue R168 coordinates D-glyceraldehyde 3-phosphate. D-ribose 5-phosphate is bound by residues G217 and 238–239 (GS).

This sequence belongs to the PdxS/SNZ family. In terms of assembly, in the presence of PdxT, forms a dodecamer of heterodimers.

The enzyme catalyses aldehydo-D-ribose 5-phosphate + D-glyceraldehyde 3-phosphate + L-glutamine = pyridoxal 5'-phosphate + L-glutamate + phosphate + 3 H2O + H(+). The protein operates within cofactor biosynthesis; pyridoxal 5'-phosphate biosynthesis. Its function is as follows. Catalyzes the formation of pyridoxal 5'-phosphate from ribose 5-phosphate (RBP), glyceraldehyde 3-phosphate (G3P) and ammonia. The ammonia is provided by the PdxT subunit. Can also use ribulose 5-phosphate and dihydroxyacetone phosphate as substrates, resulting from enzyme-catalyzed isomerization of RBP and G3P, respectively. The protein is Pyridoxal 5'-phosphate synthase subunit PdxS of Corynebacterium diphtheriae (strain ATCC 700971 / NCTC 13129 / Biotype gravis).